Consider the following 310-residue polypeptide: uncharacterized protein (310 aa).

9 helical membrane passes run 1–21 (MIYF…MFSK), 38–58 (FFFY…VVYT), 74–94 (TSYF…FFIF), 110–130 (YGLW…SFLF), 135–155 (WILY…IFFS), 194–214 (IFIT…IVFS), 228–248 (LFII…MYLF), 256–276 (FPIM…KILI), and 284–304 (IFLT…INLI).

It belongs to the TerC family.

The protein localises to the cell membrane. This is an uncharacterized protein from Buchnera aphidicola subsp. Schizaphis graminum (strain Sg).